The chain runs to 379 residues: MSSEVSKTVTVPIDLGNHSYKIDIGAGLYQQAVSILTPYVRNRRFIVITDENVARCQLPEFEKSFHEAGVTVDSIILPAGEATKSWHHLAELCDQLIRRGVERRDAIIALGGGVIGDLVGFAAAILKRGCQFIQIPTSLLAQVDSSVGGKTAINCEAGKNLIGAFHQPVFVLIDPDALQTLPARQLRAGYGEIIKYGLIDDPDFFAWCEEHGAALIEGDKASRLYAIEHSIRAKALIVADDEKEISGKRALLNLGHTFGHALEADTGFSDKLFHGEAVAAGSALAFGFSYVKNLASKEDIQRIIKHLRETGLPASLEEAGVKASGKELVAHMMHDKKMEAGRLPFLLARGIGKSFLDKEVNLEEIAAFLDSPLARKGTI.

Residues 113–117, 137–138, Lys-150, and Lys-159 contribute to the NAD(+) site; these read GVIGD and TS. 3 residues coordinate Zn(2+): Glu-192, His-256, and His-274.

The protein belongs to the sugar phosphate cyclases superfamily. Dehydroquinate synthase family. Requires Co(2+) as cofactor. Zn(2+) is required as a cofactor. NAD(+) serves as cofactor.

The protein localises to the cytoplasm. The enzyme catalyses 7-phospho-2-dehydro-3-deoxy-D-arabino-heptonate = 3-dehydroquinate + phosphate. The protein operates within metabolic intermediate biosynthesis; chorismate biosynthesis; chorismate from D-erythrose 4-phosphate and phosphoenolpyruvate: step 2/7. In terms of biological role, catalyzes the conversion of 3-deoxy-D-arabino-heptulosonate 7-phosphate (DAHP) to dehydroquinate (DHQ). In Zymomonas mobilis subsp. mobilis (strain ATCC 31821 / ZM4 / CP4), this protein is 3-dehydroquinate synthase.